A 1037-amino-acid chain; its full sequence is Mediator of RNA polymerase II transcription subunit 14 (1037 aa).

Belongs to the Mediator complex subunit 14 family. As to quaternary structure, component of the Mediator complex.

The protein localises to the nucleus. In terms of biological role, component of the Mediator complex, a coactivator involved in the regulated transcription of nearly all RNA polymerase II-dependent genes. Mediator functions as a bridge to convey information from gene-specific regulatory proteins to the basal RNA polymerase II transcription machinery. Mediator is recruited to promoters by direct interactions with regulatory proteins and serves as a scaffold for the assembly of a functional preinitiation complex with RNA polymerase II and the general transcription factors. The sequence is that of Mediator of RNA polymerase II transcription subunit 14 (RGR1) from Candida glabrata (strain ATCC 2001 / BCRC 20586 / JCM 3761 / NBRC 0622 / NRRL Y-65 / CBS 138) (Yeast).